Consider the following 351-residue polypeptide: MAAAAGRSLLLLLSSRGGGGGGAGGCGALTAGCFPGLGVSRHRQQQHHRTVHQRIASWQNLGAVYCSTVVPSDDVTVVYQNGLPVISVRLPSRRERCQFTLKPISDSVGVFLRQLQEEDRGIDRVAIYSPDGVRVAASTGIDLLLLDDFKLVINDLTYHVRPPKRDLLSHENAATLNDVKTLVQQLYTTLCIEQHQLNKERELIERLEDLKEQLAPLEKVRIEISRKAEKRTTLVLWGGLAYMATQFGILARLTWWEYSWDIMEPVTYFITYGSAMAMYAYFVMTRQEYVYPEARDRQYLLFFHKGAKKSRFDLEKYNQLKDAIAQAEMDLKRLRDPLQVHLPLRQIGEKD.

A mitochondrion-targeting transit peptide spans 1–50 (MAAAAGRSLLLLLSSRGGGGGGAGGCGALTAGCFPGLGVSRHRQQQHHRT). The Mitochondrial matrix segment spans residues 51-233 (VHQRIASWQN…ISRKAEKRTT (183 aa)). Phosphoserine; by CaMK2 occurs at positions 57 and 92. Positions 75–165 (VTVVYQNGLP…LTYHVRPPKR (91 aa)) are N-terminal MCU domain. C97 is modified (S-glutathionyl cysteine). Positions 192–223 (IEQHQLNKERELIERLEDLKEQLAPLEKVRIE) form a coiled coil. A helical transmembrane segment spans residues 234–255 (LVLWGGLAYMATQFGILARLTW). The Mitochondrial intermembrane portion of the chain corresponds to 256-262 (WEYSWDI). Residues 260–268 (WDIMEPVTY) carry the Selectivity filter motif. A helical membrane pass occupies residues 263-284 (MEPVTYFITYGSAMAMYAYFVM). Position 264 (E264) interacts with Ca(2+). The juxtamembrane helix stretch occupies residues 285-290 (TRQEYV). Over 285–351 (TRQEYVYPEA…LPLRQIGEKD (67 aa)) the chain is Mitochondrial matrix. Residues 311 to 339 (RFDLEKYNQLKDAIAQAEMDLKRLRDPLQ) are a coiled coil. The residue at position 332 (K332) is an N6-acetyllysine.

It belongs to the MCU (TC 1.A.77) family. Homotetramer. Component of the uniplex complex, composed of MCU, EMRE/SMDT1, MICU1 and MICU2 (or MICU3) in a 4:4:1:1 stoichiometry. Interacts with CCDC109B/MCUB; this inhibits channel activity. Interacts with MCUR1. Interactions with MICU1 and MCUR1 are mutually exclusive. Interacts with SLC25A23. Phosphorylation by CaMK2 in heart leads to increased MCU current. The regulation of MCU by CaMK2 is however subject to discussion: another group was unable to reproduce these results. Phosphorylated on tyrosines by PTK2B/PYK2, promoting oligomerization. In terms of processing, glutathionylation at Cys-97 in response to reactive oxygen species (ROS) promotes MCU higher-order assembly, leading to constitutive activation of the MCU channel and mitochondrial calcium overload. Post-translationally, undergoes proteolytic degradation by SPG7.

The protein localises to the mitochondrion inner membrane. It catalyses the reaction Ca(2+)(in) = Ca(2+)(out). With respect to regulation, MCU channel activity is regulated by the heterodimer composed of MICU1 and either MICU2 or MICU3, which act as calcium-sensors. At low calcium levels, MICU1 occludes the pore of the MCU channel, preventing mitochondrial calcium uptake. At higher calcium levels, calcium-binding to MICU1 and MICU2 (or MICU3) induces a conformational change that weakens MCU-MICU1 interactions and moves the MICU1-MICU2 heterodimer away from the pore, allowing calcium permeation through the channel. MCU channel activity is gated by EMRE/SMDT1 via the juxtamembrane helix loop. Inhibited by ruthenium red or its derivative Ru360. Channel-forming and calcium-conducting subunit of the mitochondrial inner membrane calcium uniporter complex (uniplex), which mediates calcium uptake into the mitochondrial matrix. MCU channel activity is regulated by the calcium-sensor subunits of the uniplex MICU1 and MICU2 (or MICU3). Mitochondrial calcium homeostasis plays key roles in cellular physiology and regulates ATP production, cytoplasmic calcium signals and activation of cell death pathways. Involved in buffering the amplitude of systolic calcium rises in cardiomyocytes. While dispensable for baseline homeostatic cardiac function, acts as a key regulator of short-term mitochondrial calcium loading underlying a 'fight-or-flight' response during acute stress: acts by mediating a rapid increase of mitochondrial calcium in pacemaker cells. Participates in mitochondrial permeability transition during ischemia-reperfusion injury. Mitochondrial calcium uptake in skeletal muscle cells is involved in muscle size in adults. Regulates synaptic vesicle endocytosis kinetics in central nerve terminal. Regulates glucose-dependent insulin secretion in pancreatic beta-cells by regulating mitochondrial calcium uptake. Involved in antigen processing and presentation. This chain is Calcium uniporter protein, mitochondrial, found in Homo sapiens (Human).